Here is a 161-residue protein sequence, read N- to C-terminus: Nucleotide-binding protein Bpro_1596 (161 aa).

It belongs to the YajQ family.

Functionally, nucleotide-binding protein. The sequence is that of Nucleotide-binding protein Bpro_1596 from Polaromonas sp. (strain JS666 / ATCC BAA-500).